We begin with the raw amino-acid sequence, 75 residues long: uncharacterized protein (75 aa).

This is an uncharacterized protein from Treponema pallidum (strain Nichols).